The following is a 391-amino-acid chain: NAD(P)H-quinone oxidoreductase subunit H, chloroplastic (391 aa).

It belongs to the complex I 49 kDa subunit family. As to quaternary structure, NDH is composed of at least 16 different subunits, 5 of which are encoded in the nucleus.

It is found in the plastid. The protein resides in the chloroplast thylakoid membrane. The enzyme catalyses a plastoquinone + NADH + (n+1) H(+)(in) = a plastoquinol + NAD(+) + n H(+)(out). It carries out the reaction a plastoquinone + NADPH + (n+1) H(+)(in) = a plastoquinol + NADP(+) + n H(+)(out). Its function is as follows. NDH shuttles electrons from NAD(P)H:plastoquinone, via FMN and iron-sulfur (Fe-S) centers, to quinones in the photosynthetic chain and possibly in a chloroplast respiratory chain. The immediate electron acceptor for the enzyme in this species is believed to be plastoquinone. Couples the redox reaction to proton translocation, and thus conserves the redox energy in a proton gradient. The protein is NAD(P)H-quinone oxidoreductase subunit H, chloroplastic of Mesostigma viride (Green alga).